We begin with the raw amino-acid sequence, 175 residues long: Protein OPG036 (175 aa).

Belongs to the poxviridae OPG036 family.

It localises to the host nucleus. Plays a role in the inhibition of host innate immune response. Within the host nucleus, inhibits activation of interferon-beta promoter by inhibiting IRF3 activation. The polypeptide is Protein OPG036 (OPG036) (Homo sapiens (Human)).